The sequence spans 378 residues: Probable cytochrome oxidase subunit 2 (378 aa).

Residues 1-8 (MIDYEFLR) lie on the Cytoplasmic side of the membrane. Residues 9–28 (FIWWVLVIVLLIGFSVTDGF) traverse the membrane as a helical segment. At 29–79 (DMGVTALLPVIGKKEVERRIMINTIAPHWDGNQVWLLTAGGAIFAAWPIVY) the chain is on the periplasmic side. A helical transmembrane segment spans residues 80-99 (AVSFSGFYIALVLVLAALFL). The Cytoplasmic segment spans residues 100-122 (RPLGFEYRAKIDNPTWRSVWDWG). Residues 123–142 (LFAGGFVPALVFGVAFGNLL) form a helical membrane-spanning segment. Topologically, residues 143–164 (QGVPFHFNELTQVTYTGSFFEL) are periplasmic. A helical transmembrane segment spans residues 165 to 184 (LNPFALLCGVISLSMLVTHG). Residues 185-205 (ANWLQMKTTEALRDRARTVSQ) are Cytoplasmic-facing. A helical transmembrane segment spans residues 206–224 (IGSIVTLIAFVLAGVWLYS). Residues 225-261 (KDGYVVTSTIDHFAPSSPMNKEVAVETGAWFRNFNEM) lie on the Periplasmic side of the membrane. The chain crosses the membrane as a helical span at residues 262–281 (PILWIFPALAVVAALLNAAF). The Cytoplasmic segment spans residues 282–291 (SKANRCGFAF). A helical membrane pass occupies residues 292 to 311 (FFSALTMAGVIITAAVSMFP). Residues 312–335 (FVMPSSSHPEQSLLMWDSTSSELT) are Periplasmic-facing. Residues 336-355 (LTLMLIFAVVFVVIALAYTI) form a helical membrane-spanning segment. The Cytoplasmic portion of the chain corresponds to 356 to 378 (WSYSKMFGRLDANFIDKNKHSLY).

This sequence belongs to the cytochrome ubiquinol oxidase subunit 2 family. As to quaternary structure, heterodimer of subunits I and II.

It is found in the cell inner membrane. Probable cytochrome oxidase subunit. This is Probable cytochrome oxidase subunit 2 from Haemophilus influenzae (strain ATCC 51907 / DSM 11121 / KW20 / Rd).